Reading from the N-terminus, the 186-residue chain is ADP-ribosylation factor-like protein 8B-A (186 aa).

An intramembrane region (note=Mediates targeting to membranes) is located at residues 1–19 (MLALINRLLDWFKSLFWKE). Residues 29-35 (QYSGKTT), 71-75 (DIGGQ), and 130-133 (NKRD) contribute to the GTP site.

It belongs to the small GTPase superfamily. Arf family.

The protein localises to the late endosome membrane. It is found in the lysosome membrane. It localises to the cytoplasm. The protein resides in the cytoskeleton. Its subcellular location is the spindle. The protein localises to the early endosome membrane. Functionally, small GTPase which cycles between active GTP-bound and inactive GDP-bound states. In its active state, binds to a variety of effector proteins playing a key role in the regulation of lysosomal positioning which is important for nutrient sensing, natural killer cell-mediated cytotoxicity and antigen presentation. Along with its effectors, orchestrates lysosomal transport and fusion. The sequence is that of ADP-ribosylation factor-like protein 8B-A (arl8ba) from Danio rerio (Zebrafish).